We begin with the raw amino-acid sequence, 258 residues long: Acyl-[acyl-carrier-protein]--UDP-N-acetylglucosamine O-acyltransferase (258 aa).

It belongs to the transferase hexapeptide repeat family. LpxA subfamily. Homotrimer.

It localises to the cytoplasm. The enzyme catalyses a (3R)-hydroxyacyl-[ACP] + UDP-N-acetyl-alpha-D-glucosamine = a UDP-3-O-[(3R)-3-hydroxyacyl]-N-acetyl-alpha-D-glucosamine + holo-[ACP]. Its pathway is glycolipid biosynthesis; lipid IV(A) biosynthesis; lipid IV(A) from (3R)-3-hydroxytetradecanoyl-[acyl-carrier-protein] and UDP-N-acetyl-alpha-D-glucosamine: step 1/6. Its function is as follows. Involved in the biosynthesis of lipid A, a phosphorylated glycolipid that anchors the lipopolysaccharide to the outer membrane of the cell. In Pseudomonas fluorescens (strain SBW25), this protein is Acyl-[acyl-carrier-protein]--UDP-N-acetylglucosamine O-acyltransferase.